Consider the following 329-residue polypeptide: Chlorophyllase-1, chloroplastic (329 aa).

A chloroplast-targeting transit peptide spans 1 to 21 (MAAMVDSKPAASVQGTPLLAT). The short motif at 145–149 (GHSRG) is the GXSXG element. The active-site Nucleophile is the Ser-147. Residues Asp-169 and His-242 each act as charge relay system in the active site.

The protein belongs to the AB hydrolase superfamily. Lipase family.

Its subcellular location is the plastid. The protein resides in the chloroplast. The enzyme catalyses a chlorophyll + H2O = a chlorophyllide + phytol + H(+). Its pathway is porphyrin-containing compound metabolism; chlorophyll degradation. Catalyzes the hydrolysis of ester bond in chlorophyll to yield chlorophyllide and phytol. The protein is Chlorophyllase-1, chloroplastic of Citrus unshiu (Satsuma mandarin).